The sequence spans 968 residues: Probable transport protein MmpL2 (968 aa).

11 helical membrane-spanning segments follow: residues 22–42 (FAVVIVLLWLGFTAFVNLAVP), 204–224 (VIAAMLLVIYRSVITAVLVLI), 245–265 (IFSLSTFATNLLVLMAIAAST), 297–317 (AHVILGSGLTIAGAMYCLSFA), 328–348 (PIAIGMLVAVLAALTLGPAVL), 378–398 (WPGPVLAATCLVASIGLLALP), 763–783 (YDLLIAGVAAISLILIIMMII), 787–807 (VVAAVVIVGTVVLSMGASFGL), 815–835 (ILGIELYWMVLAMSVILLLAV), 866–886 (TGGVVTAAGMVFAVTMSLFVF), and 890–910 (RIIGQIGTTIGLGLLFDTLVV).

This sequence belongs to the resistance-nodulation-cell division (RND) (TC 2.A.6) family. MmpL subfamily.

The protein resides in the cell membrane. This Mycobacterium tuberculosis (strain CDC 1551 / Oshkosh) protein is Probable transport protein MmpL2 (mmpL2).